The sequence spans 434 residues: UDP-glucose 6-dehydrogenase (434 aa).

Residues 2-19, Val-11, Asp-30, Lys-35, Thr-121, and Glu-152 each bind NAD(+); that span reads NITFIGSGYVGLVSGIIM. Substrate is bound by residues 148-152, Lys-204, Asn-208, 249-253, and Gly-257; these read EFLRE and FLNAG. Cys-260 functions as the Nucleophile in the catalytic mechanism. An NAD(+)-binding site is contributed by Lys-263. Lys-321 is a binding site for substrate. Residue Arg-328 coordinates NAD(+).

Belongs to the UDP-glucose/GDP-mannose dehydrogenase family.

It carries out the reaction UDP-alpha-D-glucose + 2 NAD(+) + H2O = UDP-alpha-D-glucuronate + 2 NADH + 3 H(+). It functions in the pathway nucleotide-sugar biosynthesis; UDP-alpha-D-glucuronate biosynthesis; UDP-alpha-D-glucuronate from UDP-alpha-D-glucose: step 1/1. This is UDP-glucose 6-dehydrogenase (udg) from Rickettsia typhi (strain ATCC VR-144 / Wilmington).